We begin with the raw amino-acid sequence, 583 residues long: MKPVERAKLVRSLRQESRRLRLLVLVIGFFLVTLTFVVISKPDALLFNLNGRLSVDHAPRSLLIRQRIHADSRRSADTFPAAEDPKVVDEDEGAEDATAKGTSEEEKRLLSSEPEQGKNEEAATASEVLGGGGEEDNKNGEEEGHTQHSKVTLPTVSNYTIRDAEDTDNGKQEDGKPNEKYEFEMDADKGDNVEPETDNEEWNKKPLCDFSNFRANVCEMRGNIRIHPNASSVMYMEPASSKREEIWKVKPYPRKGDELCLGHITEITVKSSKVAPECSKYHNVPAVVFALTGYTGNLFHDFTDVLVPLFTTASEFNGEVQFLITDMAIWWTRKYKVVFDKLSKYPLIDFNNDDQVHCFKHAIVGLHAYMEFTIDSSKAPHNYSMVDFNRFMRRTYSLPRDFVTALGEIPKAKPRLLIISRQRTRMFLNLNEIVAMAEEIGYEVVVEEANVSSDLSHFGKVVNSVDVMMGVHGAGLTNCVFLPQNATLIQIVPWGGLDWISRIDFGNPAEQMGLRYKQYSIGVHESSLTDQYPLDHEIFTNPLSFHKHGFEFIRQTFMDKQNVKLDCNRFKPVLLEVLDQLNQ.

At 1 to 21 (MKPVERAKLVRSLRQESRRLR) the chain is on the cytoplasmic side. The helical; Signal-anchor for type II membrane protein transmembrane segment at 22–42 (LLVLVIGFFLVTLTFVVISKP) threads the bilayer. At 43–583 (DALLFNLNGR…LLEVLDQLNQ (541 aa)) the chain is on the lumenal side. Residues 73 to 178 (RRSADTFPAA…NGKQEDGKPN (106 aa)) form a disordered region. Composition is skewed to basic and acidic residues over residues 102–121 (TSEE…KNEE) and 135–146 (EDNKNGEEEGHT). A compositionally biased stretch (polar residues) spans 149 to 160 (SKVTLPTVSNYT). A glycan (N-linked (GlcNAc...) asparagine) is linked at Asn158. Positions 162 to 178 (RDAEDTDNGKQEDGKPN) are enriched in basic and acidic residues. N-linked (GlcNAc...) asparagine glycans are attached at residues Asn229, Asn382, Asn450, and Asn485.

It belongs to the glycosyltransferase 61 family.

It localises to the golgi apparatus membrane. The protein operates within glycan metabolism. Functionally, glycosyltransferase involved in the arabinosylation of xylan, the major hemicellulose (non-cellulosic component) of primary and secondary walls of angiosperms. Possesses alpha-1,3-arabinosyltransferase activity, transferring an arabinofuranose residue to the xylan backbone. This chain is Alpha-1,3-arabinosyltransferase XAT2, found in Oryza sativa subsp. japonica (Rice).